Here is a 403-residue protein sequence, read N- to C-terminus: Phosphoglycerate kinase (403 aa).

Residues 21-23 (DFN), Arg-36, 59-62 (HLGR), Arg-119, and Arg-159 each bind substrate. ATP is bound by residues Lys-214, Gly-301, Glu-332, and 359 to 362 (GGDS).

This sequence belongs to the phosphoglycerate kinase family. Monomer.

The protein localises to the cytoplasm. The catalysed reaction is (2R)-3-phosphoglycerate + ATP = (2R)-3-phospho-glyceroyl phosphate + ADP. It participates in carbohydrate degradation; glycolysis; pyruvate from D-glyceraldehyde 3-phosphate: step 2/5. The sequence is that of Phosphoglycerate kinase from Lactobacillus helveticus (strain DPC 4571).